We begin with the raw amino-acid sequence, 1879 residues long: MILKSFILGNLVSLCMKIINSVVVVGLYYGFLTTFSIGPSYLFLLRAWLMEEGTEKKVSATTGFITGQLMMFISIYYAPLHLALGRPYTITVLALPYLLFHFFWTNPKHFFYYGSTTRNSMRNLSIQCVFLNNLIFQLFNHFILPSSMLVRLVNISMFRCNNKMLFVTSSFVGWLIGHILFMKSVGLILVWIQQNNSIISKKYIRSNKYLVSELRNSIAPIFSIILFITWVYYLGRIPSPIPLKETSKTSETAETEESEEETDVEIETTSETKGTKQEQEGSTEEDTSPSLFSEEKEDPDKIDETEEIRIDKKEKYLFGFEKPLGIILFDYKRWNRPFRYIKNDKFDNAVRKEMSQYFFYTCQSDGKDRIVFTYPPSVATFFELIEKKISLFSTEKLFYDEFDNPWKSLNEQKKRILNKIVITRILLLDKGSPTLVGDVLQKRTQLCICNDETKKEYLPKIYDPFLSGPYRRRINLLLGFSMLNETSRKNDSENIWTNKIHAIIRNNNNGFFDGVTIPYKANASDQNSIDLTEISKKVPRWSYKLIKEIEQVYDITDGELVLDYQIRSRKCKRVVILSDLNKIKKISTSTPTSTPTSTPTSTSTPTSTPTSTPTSTPTSTSTSTPASIPASTSTSIPASTSTSTSTSIPASTSTSTSIPASTSTSIPASTSTSTSTSTSIPASTSTSTNEIKSKDEPKDEPMEQAIIRYAKQWDFRREIIKGSMRAQRRKMGIYQLFQGANSYLFLDRHNFFFSDFCIYIPRLMEKLDRLRIRTNTELPISNNGEEKTREDLKNEKNQESINLKEEKHIQIAELWESIRFGQLVRGSLLITQAFLRKYIILPSVIIAANLTRILLLSPPHFFEDFKNWKKEIYVKCTYNAIPLAENEFPQNWLTDGIQIKILFPFRLQSWHRSKKIEKKDFCFLTVFGTETEQPFGSAENPFLFFKSDLIELREFIKKKKQQLKKWRTKYFRIFLRLRKKVFRKINIAKEKWVIKPILFIKKRIREFWQRNPILLLQLKEIYKLTEAKKENNSIISNGMIQSSSGSIDSIILSLRERKMKELTDRINTMLKIIEKMKKDRQKELLNTKINISPNKMSYYDKIFESQKNILKILKKRNVRFIRKSYKFLKFFVQNIYIDIFQGIINMSRINGQDSKITKSFFNNEANQERIDKPNQSIIISTIKKLLSNITNKNVKNQNLKMFWDVSYLSQAYLFYKLSQTKIINLSKLRPVFQYHGTSRFLKNEIQDYFVEVVGAHEILHSDLKQKKQKNLENSGMINPWKNWLRGHYNFDLYPIRWSKLLSQKWRNRVKQDRKNKDFNQCDSYEKKGLIDYKKQNPFETHYSLPTKKKKKYIYDSLSYKSINYEDNKDSYIYELPVQVKNNQESCYKYNKDKCKFFDILTDLPIDKYLVKNNYLVKANIRDLEKTMDRKYFDWRMLHFSIKNKGDIRVWRHNESDTNSKKNTQNGVKNFELIQKINKKIIKKIKKKELFYLTINQDKKSNPSNNKKQIFFDWMRMSEKKISRYRSNSNPKWFFPKFLILYNAYKIKPWMIPIKSLLFDLNENEIFSKKKLIEKKNGNKAKKESVAKEGVDSVLSNHTKNLQKDSAGADVKKGIKKKQSKKKIEGKLGVLRTGHFRFQLNWPNPEISKSLFMNLNGFSFMLRRLDLKKLSLAAIRNNEFSLEFLLPPSDDITFHELLEKGIFIIEPVRLSLKNDGKFIMSQTIGISLVQKNKYQLNQRYQEKGYPYKRSFAESIAIHQKRTENRTSNHYDLLVPENILSPRGRREFRILICFNSGNKNDIHRNTAFDDGNKVKTDDQVLDKRSKHLDRYQNQLKNLKLFLWPNYRLEDLACMNRYWFDTNNSSRFSMLRIHMYPQLKIR.

A run of 6 helical transmembrane segments spans residues 18 to 38, 64 to 84, 87 to 107, 124 to 144, 172 to 192, and 218 to 238; these read IINSVVVVGLYYGFLTTFSIG, FITGQLMMFISIYYAPLHLAL, PYTITVLALPYLLFHFFWTNP, LSIQCVFLNNLIFQLFNHFIL, VGWLIGHILFMKSVGLILVWI, and IAPIFSIILFITWVYYLGRIP. 2 disordered regions span residues 245 to 305 and 586 to 702; these read ETSK…IDET and ISTS…DEPM. Composition is skewed to acidic residues over residues 253-268 and 295-305; these read AETEESEEETDVEIET and EKEDPDKIDET. Over residues 586 to 688 the composition is skewed to low complexity; the sequence is ISTSTPTSTP…SIPASTSTST (103 aa). Positions 691-701 are enriched in basic and acidic residues; the sequence is IKSKDEPKDEP.

This sequence belongs to the TIC214 family. As to quaternary structure, part of the Tic complex.

It localises to the plastid. It is found in the chloroplast inner membrane. Its function is as follows. Involved in protein precursor import into chloroplasts. May be part of an intermediate translocation complex acting as a protein-conducting channel at the inner envelope. This is Protein TIC 214 from Cucumis sativus (Cucumber).